Consider the following 456-residue polypeptide: ATP synthase subunit beta 1 (456 aa).

152 to 159 (GGAGVGKS) is a binding site for ATP.

Belongs to the ATPase alpha/beta chains family. F-type ATPases have 2 components, CF(1) - the catalytic core - and CF(0) - the membrane proton channel. CF(1) has five subunits: alpha(3), beta(3), gamma(1), delta(1), epsilon(1). CF(0) has three main subunits: a(1), b(2) and c(9-12). The alpha and beta chains form an alternating ring which encloses part of the gamma chain. CF(1) is attached to CF(0) by a central stalk formed by the gamma and epsilon chains, while a peripheral stalk is formed by the delta and b chains.

Its subcellular location is the cell membrane. The enzyme catalyses ATP + H2O + 4 H(+)(in) = ADP + phosphate + 5 H(+)(out). Produces ATP from ADP in the presence of a proton gradient across the membrane. The catalytic sites are hosted primarily by the beta subunits. The protein is ATP synthase subunit beta 1 of Listeria monocytogenes serovar 1/2a (strain ATCC BAA-679 / EGD-e).